A 334-amino-acid chain; its full sequence is MRRLVRNWNCRLLFNAKSGQEIVSHAGIHQEAKTNAIPREKKVIEADKNGYGAKHCMSLVEKYDYENYLCTLLLPRELRRAAFALRAFNVEVSRSVSGHQIEPQIAKMRLKFWHDSIDKCFEPDSQRSYVEDQPVLRELKHTVGSRKLNKVYLRRLVTARERPPTHAFESIRELEEYTEQTFSSLLLLLLEVGGVRDLNADHAASHLGKAQGIATLLRSIPLAGRQQAPCIPLEVLVLHGVSQERIIRSKSDDKGVEDCIFDVASAANTHLKLARQLHDKVPPQVRKIFLSAVATDAYLERLRRANFLLTHKSCVGRDTLLPARLFWKSLLNRF.

The N-terminal 11 residues, 1–11, are a transit peptide targeting the mitochondrion; sequence MRRLVRNWNCR.

Belongs to the NDUFAF6 family. In terms of assembly, associates with mitochondrial complex I assembly intermediates during its biogenesis. Forms a complex including sicily, ND-42 and Hsp83; the complex is necessary to chaperone ND-42 in the cytoplasm before mitochondrial import; the interaction between sicily and ND-42 is direct and occurs preferably between the unprocessed forms in the cytoplasm; the interaction with Hsp83 is direct. Interacts with ND-30; interaction is stronger between the unprocessed forms in the cytoplasm. Expressed in the ventral nerve cord, larval brain, motor neuron axons, imaginal disks, and muscles (at protein level).

The protein resides in the mitochondrion inner membrane. Its subcellular location is the cytoplasm. It localises to the cytosol. In terms of biological role, involved in the assembly of mitochondrial NADH:ubiquinone oxidoreductase complex (Complex I) at early stages. Interacts with cytosolic Hsp90 to chaperone the Complex I subunit ND-42 in the cytoplasm. In Drosophila melanogaster (Fruit fly), this protein is NADH dehydrogenase (ubiquinone) complex I, assembly factor 6 homolog.